The following is a 500-amino-acid chain: Guanosine-5'-triphosphate,3'-diphosphate pyrophosphatase (500 aa).

This sequence belongs to the GppA/Ppx family. GppA subfamily.

The enzyme catalyses guanosine 3'-diphosphate 5'-triphosphate + H2O = guanosine 3',5'-bis(diphosphate) + phosphate + H(+). It functions in the pathway purine metabolism; ppGpp biosynthesis; ppGpp from GTP: step 2/2. Functionally, catalyzes the conversion of pppGpp to ppGpp. Guanosine pentaphosphate (pppGpp) is a cytoplasmic signaling molecule which together with ppGpp controls the 'stringent response', an adaptive process that allows bacteria to respond to amino acid starvation, resulting in the coordinated regulation of numerous cellular activities. The polypeptide is Guanosine-5'-triphosphate,3'-diphosphate pyrophosphatase (Photorhabdus laumondii subsp. laumondii (strain DSM 15139 / CIP 105565 / TT01) (Photorhabdus luminescens subsp. laumondii)).